The primary structure comprises 376 residues: Chorismate synthase (376 aa).

NADP(+) contacts are provided by arginine 39 and arginine 45. FMN-binding positions include 115 to 117, glycine 276, 291 to 295, and arginine 317; these read RSS and KPIPT.

Belongs to the chorismate synthase family. Homotetramer. Requires FMNH2 as cofactor.

It catalyses the reaction 5-O-(1-carboxyvinyl)-3-phosphoshikimate = chorismate + phosphate. The protein operates within metabolic intermediate biosynthesis; chorismate biosynthesis; chorismate from D-erythrose 4-phosphate and phosphoenolpyruvate: step 7/7. Catalyzes the anti-1,4-elimination of the C-3 phosphate and the C-6 proR hydrogen from 5-enolpyruvylshikimate-3-phosphate (EPSP) to yield chorismate, which is the branch point compound that serves as the starting substrate for the three terminal pathways of aromatic amino acid biosynthesis. This reaction introduces a second double bond into the aromatic ring system. In Thermotoga maritima (strain ATCC 43589 / DSM 3109 / JCM 10099 / NBRC 100826 / MSB8), this protein is Chorismate synthase.